Here is a 300-residue protein sequence, read N- to C-terminus: uncharacterized protein (300 aa).

The active-site Charge relay system is the serine 49. Tyrosine 137 (proton donor) is an active-site residue. Lysine 165 (schiff-base intermediate with substrate) is an active-site residue.

It belongs to the DapA family. As to quaternary structure, homotetramer.

The protein resides in the cytoplasm. Functionally, upon expression in E.coli complements a dapA deletion mutation, but this may not be its physiological function. This is an uncharacterized protein from Rhizobium meliloti (Ensifer meliloti).